Here is a 301-residue protein sequence, read N- to C-terminus: Probable alpha-L-glutamate ligase (301 aa).

An ATP-grasp domain is found at Leu104–Glu287. ATP is bound by residues Lys141, Glu178–Phe179, Asp187, and Arg211–Asn213. The Mg(2+) site is built by Asp248, Glu260, and Asn262. Asp248, Glu260, and Asn262 together coordinate Mn(2+).

This sequence belongs to the RimK family. Mg(2+) is required as a cofactor. Requires Mn(2+) as cofactor.

The sequence is that of Probable alpha-L-glutamate ligase from Teredinibacter turnerae (strain ATCC 39867 / T7901).